The following is a 426-amino-acid chain: Serine--tRNA ligase (426 aa).

233–235 (TAE) serves as a coordination point for L-serine. Residue 264–266 (RSE) coordinates ATP. Glu287 is a binding site for L-serine. 351-354 (EISS) contributes to the ATP binding site. An L-serine-binding site is contributed by Ser387.

It belongs to the class-II aminoacyl-tRNA synthetase family. Type-1 seryl-tRNA synthetase subfamily. Homodimer. The tRNA molecule binds across the dimer.

It is found in the cytoplasm. It carries out the reaction tRNA(Ser) + L-serine + ATP = L-seryl-tRNA(Ser) + AMP + diphosphate + H(+). It catalyses the reaction tRNA(Sec) + L-serine + ATP = L-seryl-tRNA(Sec) + AMP + diphosphate + H(+). It participates in aminoacyl-tRNA biosynthesis; selenocysteinyl-tRNA(Sec) biosynthesis; L-seryl-tRNA(Sec) from L-serine and tRNA(Sec): step 1/1. In terms of biological role, catalyzes the attachment of serine to tRNA(Ser). Is also able to aminoacylate tRNA(Sec) with serine, to form the misacylated tRNA L-seryl-tRNA(Sec), which will be further converted into selenocysteinyl-tRNA(Sec). The protein is Serine--tRNA ligase of Pseudomonas aeruginosa (strain LESB58).